We begin with the raw amino-acid sequence, 414 residues long: Ena/VASP-like protein (414 aa).

Residues 1–112 form the WH1 domain; the sequence is MSEQSICQAR…NAMLFALNIM (112 aa). Phosphoserine is present on Ser-130. The tract at residues 157 to 369 is disordered; that stretch reads ATGPILPPGH…SRVKPAGSVN (213 aa). A compositionally biased stretch (pro residues) spans 179–204; the sequence is GPPPPPPPPVPPPPTGSTPPPPPPLP. A compositionally biased stretch (low complexity) spans 217–228; the sequence is SASGLAAALAGA. An EVH2 block A region spans residues 220 to 240; sequence GLAAALAGAKLRRVQRPEDAS. Residues 220–411 are EVH2; it reads GLAAALAGAK…DAIRQELSGI (192 aa). The short motif at 229 to 232 is the KLKR element; that stretch reads KLRR. The span at 240–251 shows a compositional bias: low complexity; that stretch reads SGGSSPSGTSKS. Residues Ser-244 and Ser-257 each carry the phosphoserine modification. The interval 263-280 is EVH2 block B; the sequence is GGLMEEMNKLLAKRRKAA. Residues 297-318 show a composition bias toward polar residues; sequence EDPSTSPSPGTRATSQPPNSSE. 8 positions are modified to phosphoserine: Ser-302, Ser-304, Ser-327, Ser-329, Ser-339, Ser-347, Ser-352, and Ser-367. Positions 319–329 are enriched in basic and acidic residues; the sequence is AGRKPWERSNS. The tract at residues 340–360 is required for interaction with ZDHHC17; that stretch reads RTPSVAKSPEAKSPLQSQPHS. Residues 377–411 form an EVH2 block C region; the sequence is DLDRMKQEILEEVVRELHKVKEEIIDAIRQELSGI.

It belongs to the Ena/VASP family. Homotetramer. Binds to the SH3 domains of ABL1, LYN and SRC. Also binds to profilin, with preference for isoform IIa of PFN2, and the WW domain of APBB1/FE65. Binds to SEMA6A. Interacts, via the Pro-rich region, with the C-terminal SH3 domain of DNMBP. Interacts with RAPH1. Binds, via the EVH1 domain, the Pro-rich domain of Listeria monocytogenes actA. Binds, via the EVH1 domain, the Pro-rich domain of ZYX. Interacts with FYB1. Interacts with ZDHHC17. Post-translationally, phosphorylated by PKA; phosphorylation abolishes binding to SH3 domains of ABL and SRC. As to expression, highest expression in thymus and spleen (at protein level). Low levels in placenta, ovary, testis, fat and lung (at protein level). Isoform 1 and isoform 2 are expressed in cortical neurons and glial cells.

The protein resides in the cytoplasm. It is found in the cytoskeleton. The protein localises to the stress fiber. Its subcellular location is the cell projection. It localises to the lamellipodium. In terms of biological role, ena/VASP proteins are actin-associated proteins involved in a range of processes dependent on cytoskeleton remodeling and cell polarity such as axon guidance and lamellipodial and filopodial dynamics in migrating cells. EVL enhances actin nucleation and polymerization. This chain is Ena/VASP-like protein (Evl), found in Mus musculus (Mouse).